Consider the following 46-residue polypeptide: Large ribosomal subunit protein bL36 (46 aa).

The protein belongs to the bacterial ribosomal protein bL36 family.

This chain is Large ribosomal subunit protein bL36, found in Photorhabdus laumondii subsp. laumondii (strain DSM 15139 / CIP 105565 / TT01) (Photorhabdus luminescens subsp. laumondii).